A 196-amino-acid polypeptide reads, in one-letter code: Adenylate kinase (196 aa).

9–17 (GIPGVGKST) is a binding site for ATP.

This sequence belongs to the archaeal adenylate kinase family.

Its subcellular location is the cytoplasm. The catalysed reaction is AMP + ATP = 2 ADP. The sequence is that of Adenylate kinase from Thermococcus kodakarensis (strain ATCC BAA-918 / JCM 12380 / KOD1) (Pyrococcus kodakaraensis (strain KOD1)).